The primary structure comprises 359 residues: Photosystem II protein D1 1 (359 aa).

3 consecutive transmembrane segments (helical) span residues 29 to 46 (YVGWFGVLMIPTLLAATT), 118 to 133 (HFLIGIFCYMGREWEL), and 142 to 156 (WICVAYSAPVAAASA). A chlorophyll a-binding site is contributed by H118. Pheophytin a is bound at residue Y126. [CaMn4O5] cluster contacts are provided by D170 and E189. The chain crosses the membrane as a helical span at residues 197 to 218 (FHMMGVAGVFGGSLFSAMHGSL). H198 is a binding site for chlorophyll a. Residues H215 and 264 to 265 (SF) contribute to the a quinone site. H215 contacts Fe cation. Fe cation is bound at residue H272. The helical transmembrane segment at 274–288 (FLAAWPVVGIWFTAL) threads the bilayer. 4 residues coordinate [CaMn4O5] cluster: H332, E333, D342, and A344. Positions 345–359 (AAESTPVALQAPAIG) are excised as a propeptide.

The protein belongs to the reaction center PufL/M/PsbA/D family. PSII is composed of 1 copy each of membrane proteins PsbA, PsbB, PsbC, PsbD, PsbE, PsbF, PsbH, PsbI, PsbJ, PsbK, PsbL, PsbM, PsbT, PsbX, PsbY, PsbZ, Psb30/Ycf12, peripheral proteins PsbO, CyanoQ (PsbQ), PsbU, PsbV and a large number of cofactors. It forms dimeric complexes. The D1/D2 heterodimer binds P680, chlorophylls that are the primary electron donor of PSII, and subsequent electron acceptors. It shares a non-heme iron and each subunit binds pheophytin, quinone, additional chlorophylls, carotenoids and lipids. D1 provides most of the ligands for the Mn4-Ca-O5 cluster of the oxygen-evolving complex (OEC). There is also a Cl(-1) ion associated with D1 and D2, which is required for oxygen evolution. The PSII complex binds additional chlorophylls, carotenoids and specific lipids. is required as a cofactor. Post-translationally, tyr-161 forms a radical intermediate that is referred to as redox-active TyrZ, YZ or Y-Z. C-terminally processed by CtpA; processing is essential to allow assembly of the oxygen-evolving complex and thus photosynthetic growth.

The protein resides in the cellular thylakoid membrane. It catalyses the reaction 2 a plastoquinone + 4 hnu + 2 H2O = 2 a plastoquinol + O2. Its function is as follows. Photosystem II (PSII) is a light-driven water:plastoquinone oxidoreductase that uses light energy to abstract electrons from H(2)O, generating O(2) and a proton gradient subsequently used for ATP formation. It consists of a core antenna complex that captures photons, and an electron transfer chain that converts photonic excitation into a charge separation. The D1/D2 (PsbA/PsbD) reaction center heterodimer binds P680, the primary electron donor of PSII as well as several subsequent electron acceptors. The sequence is that of Photosystem II protein D1 1 from Synechococcus sp. (strain WH7803).